A 287-amino-acid polypeptide reads, in one-letter code: Putative sugar uptake protein M6_Spy1874 (287 aa).

The next 10 membrane-spanning stretches (helical) occupy residues Ile4–Gly26, Leu33–Val50, Thr55–Gly72, Val85–Val107, Phe117–Ser134, Phe154–Phe171, Ser181–Phe200, Tyr207–Ala229, Leu234–Leu256, and Val268–Val285.

This sequence belongs to the GRP transporter (TC 2.A.7.5) family.

It localises to the cell membrane. The chain is Putative sugar uptake protein M6_Spy1874 from Streptococcus pyogenes serotype M6 (strain ATCC BAA-946 / MGAS10394).